The sequence spans 156 residues: MTKKFIGKEDFANLQKNKSGIYISNDYITVYKKVYCKNRLYNSRTSFDSEESVHDIFNPESIVELEIPPGAIIVKPVSNNYTKMNKMRTNKAIVNKITRLIDNKQIDDSYVCYSTYDPSFRYKVGSTVGTRLDTNVNKTNVSGIHFFKDQKEAENY.

It belongs to the mimivirus L223/L227/L812 family.

This is an uncharacterized protein from Acanthamoeba polyphaga mimivirus (APMV).